Here is a 375-residue protein sequence, read N- to C-terminus: MAPLTAAMRSTPRIIVSNAFGFQRRAISDVTITRTGKPIIRNQGGRSSLGGHTATVFGATGQLGRYIVNRLARQGCTVVIPFRDEYNKRHLKVTGDLGKVVMIEFDLRNTQSIEESVRHSDVVYNLIGRDYPTKNFSFEDVHIEGAERIAEAVAKYDVDRFIHVSSYNADPNSECEFFATKARGEQVVRSIFPETTIVRPAPMFGFEDRLLHKLASVKNILTSNGMQEKYNPVHVIDVGQALEQMLWDDNTASETFELYGPKTYTTAEISEMVDREIYKRRRHVNVPKKILKPIAGVLNKALWWPIMSADEIEREFHDQVIDPEAKTFKDLGIEPADIANFTYHYLQSYRSNAYYDLPPATEKERREDREYIHML.

A mitochondrion-targeting transit peptide spans 1–26 (MAPLTAAMRSTPRIIVSNAFGFQRRA).

The protein belongs to the complex I NDUFA9 subunit family. As to quaternary structure, complex I is composed of about 40 different subunits. It depends on FAD as a cofactor.

The protein localises to the mitochondrion matrix. In terms of biological role, accessory subunit of the mitochondrial membrane respiratory chain NADH dehydrogenase (Complex I), that is believed not to be involved in catalysis. Complex I functions in the transfer of electrons from NADH to the respiratory chain. The immediate electron acceptor for the enzyme is believed to be ubiquinone. In Neurospora crassa (strain ATCC 24698 / 74-OR23-1A / CBS 708.71 / DSM 1257 / FGSC 987), this protein is NADH-ubiquinone oxidoreductase 40 kDa subunit, mitochondrial (nuo40).